The sequence spans 675 residues: Potassium-transporting ATPase ATP-binding subunit (675 aa).

The next 4 membrane-spanning stretches (helical) occupy residues 34 to 54, 65 to 85, 216 to 236, and 245 to 265; these read IMFV…FPDI, LITI…SEAF, IALF…IVTL, and LILP…TTIG. Residue Asp-304 is the 4-aspartylphosphate intermediate of the active site. Residues Asp-341, Glu-345, 372–379, and Lys-390 contribute to the ATP site; that span reads FTAETRMS. The Mg(2+) site is built by Asp-513 and Asp-517. 3 helical membrane passes run 569 to 591, 611 to 631, and 644 to 664; these read ALTT…ALMM, AIIS…PIAM, and IFIN…FLGI.

This sequence belongs to the cation transport ATPase (P-type) (TC 3.A.3) family. Type IA subfamily. As to quaternary structure, the system is composed of three essential subunits: KdpA, KdpB and KdpC.

The protein resides in the cell membrane. It catalyses the reaction K(+)(out) + ATP + H2O = K(+)(in) + ADP + phosphate + H(+). Part of the high-affinity ATP-driven potassium transport (or Kdp) system, which catalyzes the hydrolysis of ATP coupled with the electrogenic transport of potassium into the cytoplasm. This subunit is responsible for energy coupling to the transport system and for the release of the potassium ions to the cytoplasm. This is Potassium-transporting ATPase ATP-binding subunit from Staphylococcus aureus (strain Newman).